The sequence spans 535 residues: Alcohol O-acetyltransferase 2 (535 aa).

Residues 19 to 36 (GHARRMGHLENYFAVLSR) form a membrane association region. Active-site charge relay system residues include histidine 189 and aspartate 193. The membrane association stretch occupies residues 515 to 532 (RGEWESFCKLFYQTIGEF).

It belongs to the ATF1 alcohol acetyltransferase family.

Its subcellular location is the lipid droplet. The protein resides in the endoplasmic reticulum membrane. It carries out the reaction an aliphatic alcohol + acetyl-CoA = an acetyl ester + CoA. Its function is as follows. Can use acetyl-CoA to synthesize acetate esters from various alcohols, producing ethyl acetate, isoamyl acetate, isobutyl acetate, butyl acetate, hexyl acetate, heptyl acetate and octyl acetate. ATF2 seems to play only a minor role in the acetate ester synthesis, compared to ATF1. Plays an active role in the detoxification hydroxysteroids and possibly certain phytochemicals, in association with the efflux pumps PDR5 and SNQ2. The sequence is that of Alcohol O-acetyltransferase 2 from Saccharomyces cerevisiae (strain ATCC 204508 / S288c) (Baker's yeast).